The sequence spans 89 residues: MALTQTRKQEIINQYQAHGTDTGSADLQVALLTERINQLTTHLQANPKDHASRRGLLQLIGRRRGLLSYIQKKDFQRYQDLIGRLGIRR.

The protein belongs to the universal ribosomal protein uS15 family. As to quaternary structure, part of the 30S ribosomal subunit. Forms a bridge to the 50S subunit in the 70S ribosome, contacting the 23S rRNA.

Its function is as follows. One of the primary rRNA binding proteins, it binds directly to 16S rRNA where it helps nucleate assembly of the platform of the 30S subunit by binding and bridging several RNA helices of the 16S rRNA. Functionally, forms an intersubunit bridge (bridge B4) with the 23S rRNA of the 50S subunit in the ribosome. The polypeptide is Small ribosomal subunit protein uS15 (Gloeothece citriformis (strain PCC 7424) (Cyanothece sp. (strain PCC 7424))).